The following is a 375-amino-acid chain: Metal tolerance protein B (375 aa).

Residues 1–57 (MELEQICILKPDDEEEMESPSPSKTEENLGVVPLSCAFTRQEHCVSETKEREESTRR) lie on the Cytoplasmic side of the membrane. A helical transmembrane segment spans residues 58-78 (LSSLIFLYLIVMSVQIVGGFK). At 79 to 84 (ANSLAV) the chain is on the vacuolar side. A helical membrane pass occupies residues 85-105 (MTDAAHLLSDVAGLCVSLLAI). Topologically, residues 106 to 122 (KVSSWEANPRNSFGFKR) are cytoplasmic. A helical membrane pass occupies residues 123 to 143 (LEVLAAFLSVQLIWLVSGVII). The Vacuolar portion of the chain corresponds to 144–160 (HEAIQRLLSRSREVNGE). Residues 161–181 (IMFGISAFGFFMNLVMVLWLG) traverse the membrane as a helical segment. Residues 182-206 (HNHSHHHHDHHHHHHNHKHQHQHHH) form a required for zinc-binding region. The Cytoplasmic portion of the chain corresponds to 182–240 (HNHSHHHHDHHHHHHNHKHQHQHHHKEVVAEEEEEEMNPLKGEKSSSKEMNINIQGAYL). The helical transmembrane segment at 241–261 (HAMADMIQSLGVMIGGGIIWV) threads the bilayer. Over 262–264 (KPK) the chain is Vacuolar. The chain crosses the membrane as a helical span at residues 265-285 (WVLVDLICTLVFSAFALAATL). Topologically, residues 286 to 375 (PILKNIFGIL…YHATVQVESE (90 aa)) are cytoplasmic.

Belongs to the cation diffusion facilitator (CDF) transporter (TC 2.A.4) family. SLC30A subfamily.

It localises to the vacuole membrane. In terms of biological role, involved in sequestration of excess zinc in the cytoplasm into vacuoles to maintain zinc homeostasis. The chain is Metal tolerance protein B (MTPB) from Arabidopsis thaliana (Mouse-ear cress).